The primary structure comprises 492 residues: Probable cytosol aminopeptidase (492 aa).

2 residues coordinate Mn(2+): Lys248 and Asp253. Lys260 is a catalytic residue. Mn(2+)-binding residues include Asp271, Asp330, and Glu332. Arg334 is a catalytic residue.

Belongs to the peptidase M17 family. Mn(2+) serves as cofactor.

Its subcellular location is the cytoplasm. The enzyme catalyses Release of an N-terminal amino acid, Xaa-|-Yaa-, in which Xaa is preferably Leu, but may be other amino acids including Pro although not Arg or Lys, and Yaa may be Pro. Amino acid amides and methyl esters are also readily hydrolyzed, but rates on arylamides are exceedingly low.. It catalyses the reaction Release of an N-terminal amino acid, preferentially leucine, but not glutamic or aspartic acids.. In terms of biological role, presumably involved in the processing and regular turnover of intracellular proteins. Catalyzes the removal of unsubstituted N-terminal amino acids from various peptides. The protein is Probable cytosol aminopeptidase (pepA) of Aeropyrum pernix (strain ATCC 700893 / DSM 11879 / JCM 9820 / NBRC 100138 / K1).